A 359-amino-acid polypeptide reads, in one-letter code: Aromatic amino acid aminotransferase (359 aa).

Basic and acidic residues predominate over residues 1-12 (MSETSPKLRAEL). The disordered stretch occupies residues 1-21 (MSETSPKLRAELEGIPTYKPG). Residue K223 is modified to N6-(pyridoxal phosphate)lysine.

It belongs to the class-II pyridoxal-phosphate-dependent aminotransferase family. Homodimer. Pyridoxal 5'-phosphate is required as a cofactor.

It carries out the reaction an aromatic L-alpha-amino acid + 2-oxoglutarate = an aromatic oxo-acid + L-glutamate. Aminotransferase that catalyzes the conversion of aromatic amino acids and 2-oxoglutarate into corresponding aromatic oxo acids and L-glutamate. This is Aromatic amino acid aminotransferase from Streptomyces coelicolor (strain ATCC BAA-471 / A3(2) / M145).